The primary structure comprises 310 residues: Nitric oxide synthase-interacting protein homolog (310 aa).

Residues 115 to 124 (FSAIESTPSR) are compositionally biased toward polar residues. Positions 115-141 (FSAIESTPSRTGAVATPRPEVGSLKRQ) are disordered.

Belongs to the NOSIP family.

The protein resides in the cytoplasm. The protein localises to the nucleus. Functionally, negatively regulates nitric oxide production by inducing nitric oxide synthase translocation to actin cytoskeleton and inhibiting its enzymatic activity. The sequence is that of Nitric oxide synthase-interacting protein homolog from Caenorhabditis elegans.